Reading from the N-terminus, the 401-residue chain is L-rhamnonate dehydratase (401 aa).

Substrate-binding residues include H29 and R55. The Mg(2+) site is built by D222, E248, and E276. The active-site Proton acceptor is the H325. E345 lines the substrate pocket.

This sequence belongs to the mandelate racemase/muconate lactonizing enzyme family. RhamD subfamily. In terms of assembly, homooctamer; tetramer of dimers. Mg(2+) is required as a cofactor.

The enzyme catalyses L-rhamnonate = 2-dehydro-3-deoxy-L-rhamnonate + H2O. Functionally, catalyzes the dehydration of L-rhamnonate to 2-keto-3-deoxy-L-rhamnonate (KDR). This Escherichia coli O157:H7 protein is L-rhamnonate dehydratase.